Reading from the N-terminus, the 115-residue chain is Large ribosomal subunit protein uL24 (115 aa).

The protein belongs to the universal ribosomal protein uL24 family. In terms of assembly, part of the 50S ribosomal subunit.

Functionally, one of two assembly initiator proteins, it binds directly to the 5'-end of the 23S rRNA, where it nucleates assembly of the 50S subunit. One of the proteins that surrounds the polypeptide exit tunnel on the outside of the subunit. This Deinococcus deserti (strain DSM 17065 / CIP 109153 / LMG 22923 / VCD115) protein is Large ribosomal subunit protein uL24.